We begin with the raw amino-acid sequence, 772 residues long: MLKLFSAFRKNKIWDFNGGIHPPEMKTQSNGTPLRQVPLAQRFVIPLKQHIGAEGELCVSVGDKVLRGQPLTRGRGKMLPVHAPTSGTVTAIAPHSTAHPSALAELSVIIDADGEDCWIPRDGWADYRSRRREELIERIHQFGVAGLGGAGFPTGVKLQGGGDKIETLIINAAECEPYITADDRLMQDCAAQVVEGIRILAHILQPREILIGIEDNKPQAISMLRAVLADSHDISLRVIPTKYPSGGAKQLTYILTGKQVPHGGRSSDIGVLMQNVGTAYAVKRAVIDGEPITERVVTLTGEAIARPGNVWARLGTPVRHLLNDAGFCPSADQMVIMGGPLMGLTLPWLDVPVVKITNCLLAPSANELGEPQEEQSCIRCSACADACPADLLPQQLYWFSKGQQHDKATTHNIADCIECGACAWVCPSNIPLVQYFRQEKAEIAAIRQEEKRAAEAKARFEARQARLEREKAARLERHKSAAVQPAAKDKDAIAAALARVKEKQAQATQPIVIKAGERPDNSAIIAAREARKAQARAKQAELQQTNDAATVTDPRKTAVEAAIARAKARKLEQQQANAEPEEQVDPRKAAVEAAIARAKARKLEQQQANAEPEEQVDPRKATVEAAIARAKARKLEQQQANAEPEEPVDPRKAAVEAAIARAKARKLEQQQANAEPEEPVDPRKAAVEAAIARAKARKLEQQQANAEPEEQVDPRKAAVEAAIARAKARKLEQQQANAEPEEQVDPRKAAVAAAIARVQAKKAAQQKVVNED.

4Fe-4S ferredoxin-type domains are found at residues 369–397 (GEPQEEQSCIRCSACADACPADLLPQQLY) and 407–436 (KATTHNIADCIECGACAWVCPSNIPLVQYF). Cys377, Cys380, Cys383, Cys387, Cys416, Cys419, Cys422, and Cys426 together coordinate [4Fe-4S] cluster. The disordered stretch occupies residues 599–748 (KARKLEQQQA…EPEEQVDPRK (150 aa)).

The protein belongs to the 4Fe4S bacterial-type ferredoxin family. RnfC subfamily. In terms of assembly, the complex is composed of six subunits: RsxA, RsxB, RsxC, RsxD, RsxE and RsxG. [4Fe-4S] cluster serves as cofactor.

It is found in the cell inner membrane. In terms of biological role, part of a membrane-bound complex that couples electron transfer with translocation of ions across the membrane. Required to maintain the reduced state of SoxR. The sequence is that of Ion-translocating oxidoreductase complex subunit C from Shigella dysenteriae serotype 1 (strain Sd197).